A 381-amino-acid polypeptide reads, in one-letter code: Dual specificity protein phosphatase 6 (381 aa).

A Rhodanese domain is found at 30–148 (GNERLLLMDC…FQAEFALHCE (119 aa)). Positions 176 to 203 (SSSDIESDLDRDPNSATDSDGSPLSNSQ) are disordered. Polar residues predominate over residues 189-203 (NSATDSDGSPLSNSQ). The Tyrosine-protein phosphatase domain occupies 206–349 (FPVEILPFLY…LLDFERTLGL (144 aa)). The Phosphocysteine intermediate role is filled by Cys293.

This sequence belongs to the protein-tyrosine phosphatase family. Non-receptor class dual specificity subfamily. Interacts with MAPK1/ERK2. Post-translationally, ubiquitinated by the SCF(FBXO31) complex, leading to its proteasomal degradation.

The protein localises to the cytoplasm. The catalysed reaction is O-phospho-L-tyrosyl-[protein] + H2O = L-tyrosyl-[protein] + phosphate. The enzyme catalyses O-phospho-L-seryl-[protein] + H2O = L-seryl-[protein] + phosphate. It catalyses the reaction O-phospho-L-threonyl-[protein] + H2O = L-threonyl-[protein] + phosphate. In terms of biological role, dual specificity protein phosphatase, which mediates dephosphorylation and inactivation of MAP kinases. Has a specificity for the ERK family. Plays an important role in alleviating acute postoperative pain. Necessary for the normal dephosphorylation of the long-lasting phosphorylated forms of spinal MAPK1/3 and MAP kinase p38 induced by peripheral surgery, which drives the resolution of acute postoperative allodynia. Also important for dephosphorylation of MAPK1/3 in local wound tissue, which further contributes to resolution of acute pain. This is Dual specificity protein phosphatase 6 (Dusp6) from Mus musculus (Mouse).